We begin with the raw amino-acid sequence, 65 residues long: MPKMKTHRGAAKRFKVLKSGKVKRSKAYKSHLLTHKNAKRKRRLRKATYLVGGDAKNIRRLLPYS.

Belongs to the bacterial ribosomal protein bL35 family.

The sequence is that of Large ribosomal subunit protein bL35 from Thermoanaerobacter sp. (strain X514).